A 1843-amino-acid chain; its full sequence is Protein TIC 214 (1843 aa).

Helical transmembrane passes span 18-38, 64-84, 87-107, 124-144, 172-192, and 217-237; these read IINSVVVVGLYYGFLTTFSIG, FITGQLMMFISIYYAPLHLAL, PHTITVLVLPYLLFHFFWNNH, LSIQCVFLNNLIFQLFNHFIL, VGWLIGHILFMKWVGLVLFWI, and IFSILLFITCVYYLGRIPSPI. Disordered stretches follow at residues 244 to 281, 557 to 576, 582 to 647, 724 to 744, and 1527 to 1586; these read ETSKTEEREESEEETDVEIETTSETKGTKQEQEGAAEK, EEIENDEESKPDHGIRSRKA, FTDN…DEVA, NSEEEDTKEKEKKREEKRQEN, and SLEL…KKKK. Residues 251–264 are compositionally biased toward acidic residues; sequence REESEEETDVEIET. Positions 269 to 281 are enriched in basic and acidic residues; sequence KGTKQEQEGAAEK. Residues 590–639 are compositionally biased toward low complexity; it reads NTPTSTTETTSTAETTSTTETTSTTKNTSTTKNTSTTETTSTTENENTSN. 2 stretches are compositionally biased toward basic and acidic residues: residues 730–744 and 1527–1540; these read TKEKEKKREEKRQEN and SLELKNKEEKKKPA. The span at 1543–1562 shows a compositional bias: polar residues; it reads NIGSDTQKQGNPGSDPSTQQ. Residues 1563–1580 are compositionally biased toward basic and acidic residues; the sequence is KDIKKNVKEDYDGRSDIQ.

It belongs to the TIC214 family. As to quaternary structure, part of the Tic complex.

The protein localises to the plastid. Its subcellular location is the chloroplast inner membrane. Its function is as follows. Involved in protein precursor import into chloroplasts. May be part of an intermediate translocation complex acting as a protein-conducting channel at the inner envelope. This is Protein TIC 214 from Nandina domestica (Heavenly bamboo).